A 511-amino-acid chain; its full sequence is GATA zinc finger domain-containing protein 15 (511 aa).

Residues 1–111 are compositionally biased toward low complexity; the sequence is TNNNNFNNIN…FNDNCNNNSN (111 aa). Disordered stretches follow at residues 1-194, 214-313, and 325-355; these read TNNN…NTFF, NVNN…NENK, and NLQY…VLSP. Positions 124-135 are enriched in polar residues; that stretch reads SLQNINQYPLSP. Residues 136 to 166 show a composition bias toward low complexity; it reads NNNKSSNQHLSHSSSNVNSQYYQTPYYQPSQ. Polar residues predominate over residues 167 to 185; it reads KQNSPNSTPPLNGCQYENH. Low complexity-rich tracts occupy residues 214–309 and 337–351; these read NVNN…NNDN and SGST…PTSP. A GATA-type zinc finger spans residues 453–478; sequence CQACGTRASPEWRKGPDGFKSLCNAC.

The polypeptide is GATA zinc finger domain-containing protein 15 (gtaO) (Dictyostelium discoideum (Social amoeba)).